Consider the following 57-residue polypeptide: PDPCCNDKCDCKEGECKTGCKCTSCRCPPCEQCSSGCKCANKEDCRKTCSKPCSCCP.

The beta stretch occupies residues 1–28 (PDPCCNDKCDCKEGECKTGCKCTSCRCP). Positions 4, 5, 9, 11, 16, 20, 22, 25, 27, 30, 33, 37, 39, 45, 49, 53, 55, and 56 each coordinate a divalent metal cation. Residues 29–57 (PCEQCSSGCKCANKEDCRKTCSKPCSCCP) form an alpha region.

This sequence belongs to the metallothionein superfamily. Type 3 family.

In terms of biological role, metallothioneins have a high content of cysteine residues that bind various heavy metals. Class I MTS in marine crustacea are involved in the sequestration of elevated levels of heavy-metal ions. The protein is Metallothionein-2 of Scylla serrata (Mud crab).